Consider the following 1087-residue polypeptide: Exportin-7-A (1087 aa).

The 67-residue stretch at 30 to 96 folds into the Importin N-terminal domain; sequence AEKALVEFTN…RNYVLTYLAT (67 aa).

The protein belongs to the exportin family. In terms of tissue distribution, expressed in oocytes (at protein level).

It localises to the cytoplasm. It is found in the nucleus. In terms of biological role, mediates the nuclear export of proteins (cargos) with broad substrate specificity. In Xenopus laevis (African clawed frog), this protein is Exportin-7-A (xpo7-a).